We begin with the raw amino-acid sequence, 2320 residues long: Bromodomain and WD repeat-containing protein 1 (2320 aa).

WD repeat units lie at residues 184-223 (GHLSAVYCVAFDRTGHRIFTGSDDCLVKIWSTHNGRLLST), 226-265 (GHSAEISDMAVNYENTMIAAGSCDKIIRVWCLRTCAPVAV), 268-311 (GHTG…LKFS), 322-365 (RPGV…AELE), 366-405 (SHTDKVDSIQFCNNGDRFLSGSRDGTARIWRFEQLEWRSI), 424-463 (FMKPKVTMIAWNQNDSIVVTAVNDHVLKVWNSYTGQLLHN), 466-506 (GHAD…KMKH), and 514-553 (QGHGAVFDCKFSQDGQHFACTDSHGHLLIFGFGCSKPYEK). The disordered stretch occupies residues 668–691 (QRMGADQDTIPRGLSNGEETPRRG). Thr-687 bears the Phosphothreonine mark. 3 positions are modified to phosphoserine: Ser-696, Ser-701, and Ser-710. Disordered regions lie at residues 809–867 (NRSW…RYSD) and 895–925 (SEDEISTENLSPPKRRRKRKKENKPKKENLR). Low complexity-rich tracts occupy residues 814–824 (ELSSGNESSSS) and 854–867 (YSESSSDSSSRYSD). Residues 907–918 (PKRRRKRKKENK) show a composition bias toward basic residues. The Bromo 1 domain maps to 1157–1264 (WGQKSRDEEC…DQLLKFIKNQ (108 aa)). Residues 1271-1304 (ELSNTSENDEQNAEDLDDSDLPKTSSGRRRVHDG) are disordered. Positions 1277–1289 (ENDEQNAEDLDDS) are enriched in acidic residues. Ser-1289 is modified (phosphoserine). Positions 1313–1418 (YVESNWKKQC…ALFEEKMKKI (106 aa)) constitute a Bromo 2 domain. The segment at 1434-1593 (RSQRFKQRQN…TGPVSLANGC (160 aa)) is disordered. The span at 1443–1454 (NCKGDSQPNKSI) shows a compositional bias: polar residues. Positions 1455-1464 (RNLKPKRLKS) are enriched in basic residues. At Ser-1475 the chain carries Phosphoserine. The span at 1475-1496 (SPTQSTSSRTAYLGTHKTSAGI) shows a compositional bias: polar residues. Thr-1477 bears the Phosphothreonine mark. Residue Ser-1479 is modified to Phosphoserine. Positions 1497 to 1509 (SSGVTSGDSSDSA) are enriched in low complexity. The span at 1520 to 1529 (PITNGSTLSE) shows a compositional bias: polar residues. The segment covering 1535–1548 (SLATSLSSSASSSS) has biased composition (low complexity). The segment covering 1549 to 1561 (EESKESSRARESS) has biased composition (basic and acidic residues). Residues Ser-1605, Ser-1607, Ser-1678, Ser-1683, and Ser-1686 each carry the phosphoserine modification. 3 disordered regions span residues 1670–1805 (ARKK…KYNT), 1817–1839 (KILSDSEDSESEEQDREDGKCHK), and 1862–1899 (DHGCETDLDSDDDKIEKPNNFMKDSASQDNGLSRKISR). Basic and acidic residues predominate over residues 1676–1687 (HNSEDEQSLKSE). Positions 1701 to 1712 (PVSSSHTAQSNV) are enriched in polar residues. Basic and acidic residues-rich tracts occupy residues 1715–1728 (SENRDSESESDLRV) and 1751–1769 (LKIESSEEDSKSHDSDHAC). 6 positions are modified to phosphoserine: Ser-1755, Ser-1756, Ser-1786, Ser-1788, Ser-1793, and Ser-1820. Positions 1821-1832 (DSEDSESEEQDR) are enriched in acidic residues. Thr-1867 is subject to Phosphothreonine. Ser-1871, Ser-1904, Ser-1905, Ser-1907, Ser-1910, and Ser-1943 each carry phosphoserine. Residue Thr-1955 is modified to Phosphothreonine. Disordered regions lie at residues 2014-2077 (LNGD…TLAQ) and 2112-2184 (TKVI…TKGK). Phosphoserine is present on residues Ser-2018, Ser-2020, and Ser-2052. Composition is skewed to basic and acidic residues over residues 2054-2069 (EDSKSHIPGSETDRTF) and 2114-2139 (VIHDSQETAEKEVKRKRSHPELENVK). Residues 2140–2165 (ISETTGNSKFRPDTSSKSSDLGSVTE) show a composition bias toward polar residues. Thr-2164 carries the post-translational modification Phosphothreonine. Residues Ser-2166 and Val-2214 each carry the phosphoserine modification.

In terms of assembly, interacts with SMARCA4. As to expression, ubiquitously expressed. Expressed in respiratory epithelial cells and testis spermatozoa.

The protein localises to the cytoplasm. The protein resides in the nucleus. Its subcellular location is the cell projection. It is found in the cilium membrane. It localises to the cytoskeleton. The protein localises to the flagellum axoneme. Functionally, may be a transcriptional activator. May be involved in chromatin remodeling. Plays a role in the regulation of cell morphology and cytoskeletal organization. Required in the control of cell shape. In Homo sapiens (Human), this protein is Bromodomain and WD repeat-containing protein 1 (BRWD1).